The primary structure comprises 117 residues: MARVKRGVIARARHKKVLKAAKGYYGARSRVYRVAFQAVIKAGQYAYRDRRQRKRQFRQLWIARINAATRQNGLSYSKFINGLKKASVEIDRKILADIAVFDKVAFTALVEKAKSAL.

The protein belongs to the bacterial ribosomal protein bL20 family.

Functionally, binds directly to 23S ribosomal RNA and is necessary for the in vitro assembly process of the 50S ribosomal subunit. It is not involved in the protein synthesizing functions of that subunit. The chain is Large ribosomal subunit protein bL20 from Histophilus somni (strain 129Pt) (Haemophilus somnus).